We begin with the raw amino-acid sequence, 474 residues long: Zinc finger protein 230 (474 aa).

Positions 8-76 (VTFKDVAVFF…ETATQREGNS (69 aa)) constitute a KRAB domain. Residues 80–167 (TIAEAGPHED…PQQFHSGEKS (88 aa)) form a KRNB region. C2H2-type zinc fingers lie at residues 168–190 (HTCN…QRVH), 196–218 (SKCD…ERVH), 224–246 (FKCE…CKLH), 252–274 (YICE…QIIH), 280–302 (FKCE…CMVH), 308–330 (YKSE…QIIH), 336–358 (YNCK…QRIH), 364–386 (YRCE…QRVH), and 392–414 (YNCK…KKLH). Residues 420 to 442 (FKCEDCGKRLVHRSFCKDQQGDH) form a C2H2-type 10; atypical zinc finger.

This sequence belongs to the krueppel C2H2-type zinc-finger protein family.

The protein localises to the nucleus. Its function is as follows. May be involved in transcriptional regulation. This chain is Zinc finger protein 230 (ZNF230), found in Homo sapiens (Human).